We begin with the raw amino-acid sequence, 155 residues long: Basic phospholipase A2 PC9 (155 aa).

The N-terminal stretch at 1-21 (MYPAHLLVLLAVCVSLLGASA) is a signal peptide. Residues 22–27 (ISPRPL) constitute a propeptide that is removed on maturation. 7 disulfide bridges follow: Cys-38/Cys-98, Cys-54/Cys-144, Cys-56/Cys-72, Cys-71/Cys-125, Cys-78/Cys-118, Cys-87/Cys-111, and Cys-105/Cys-116. The Ca(2+) site is built by Tyr-55, Gly-57, and Gly-59. His-75 is an active-site residue. A Ca(2+)-binding site is contributed by Asp-76. The active site involves Asp-119.

Belongs to the phospholipase A2 family. Group I subfamily. D49 sub-subfamily. Ca(2+) serves as cofactor. In terms of tissue distribution, expressed by the venom gland.

The protein localises to the secreted. The catalysed reaction is a 1,2-diacyl-sn-glycero-3-phosphocholine + H2O = a 1-acyl-sn-glycero-3-phosphocholine + a fatty acid + H(+). Snake venom phospholipase A2 (PLA2) that inhibits neuromuscular transmission by blocking acetylcholine release from the nerve termini. PLA2 catalyzes the calcium-dependent hydrolysis of the 2-acyl groups in 3-sn-phosphoglycerides. The sequence is that of Basic phospholipase A2 PC9 from Laticauda colubrina (Yellow-lipped sea krait).